The sequence spans 120 residues: Ribosome-binding factor A (120 aa).

The protein belongs to the RbfA family. Monomer. Binds 30S ribosomal subunits, but not 50S ribosomal subunits or 70S ribosomes.

Its subcellular location is the cytoplasm. One of several proteins that assist in the late maturation steps of the functional core of the 30S ribosomal subunit. Associates with free 30S ribosomal subunits (but not with 30S subunits that are part of 70S ribosomes or polysomes). Required for efficient processing of 16S rRNA. May interact with the 5'-terminal helix region of 16S rRNA. The protein is Ribosome-binding factor A of Rickettsia felis (strain ATCC VR-1525 / URRWXCal2) (Rickettsia azadi).